A 117-amino-acid chain; its full sequence is NADH-ubiquinone oxidoreductase chain 3 (117 aa).

Transmembrane regions (helical) follow at residues 6–26, 58–78, and 85–105; these read ILIL…ASYI, FFLI…LFPW, and LPLF…LGLI.

This sequence belongs to the complex I subunit 3 family.

Its subcellular location is the mitochondrion membrane. The catalysed reaction is a ubiquinone + NADH + 5 H(+)(in) = a ubiquinol + NAD(+) + 4 H(+)(out). Core subunit of the mitochondrial membrane respiratory chain NADH dehydrogenase (Complex I) that is believed to belong to the minimal assembly required for catalysis. Complex I functions in the transfer of electrons from NADH to the respiratory chain. The immediate electron acceptor for the enzyme is believed to be ubiquinone. The sequence is that of NADH-ubiquinone oxidoreductase chain 3 (ND3) from Sarcophyton glaucum (Toadstool umbrella leather coral).